Consider the following 453-residue polypeptide: MAARKSGSDIHNNGPVSYLDDVPFKLNEKFRCPSKVGLPIGFCLSDCNAILSDLQYDFNLERRTVQWGEELAKARAAEARAAEAIRTDSESERQAASQDAEVGLVGGKKARPSDEQDIVPPALKPVLAGLSHNAILTPLPAPSFGQTRPAPSNPAPQYLNLADFEREEDPFDKLELKTLDDKEELRTILQSQPQSSVSPPQLPPAEHRPVSPSTTPPLQAKTGIFHKPNGLVGLLDLDRGGVLGGQIDADRPCNIRSLTFPKLSDPGDSPLETPLSVYPVAPPRNLSNGTPPSLQRTASNNNTTLPQEQPVFAQNGTPKQSNPVTVTSHPPAGTTLLSLSPSERQCVETIVGMGYSYEGVLKAMQRQGQNVEQVLEYLFTHSRLCDRGFDATAVEECLEMYQGSEEKALEFLQLMSRFGEMGFERDTIKEVLLVHNNDQDKALEDLMTRATAS.

Residues 19–65 (LDDVPFKLNEKFRCPSKVGLPIGFCLSDCNAILSDLQYDFNLERRTV) form the UMA domain. The segment covering 83–93 (EAIRTDSESER) has biased composition (basic and acidic residues). Disordered regions lie at residues 83–119 (EAIR…QDIV), 189–223 (LQSQ…AKTG), and 260–335 (FPKL…AGTT). Positions 189–199 (LQSQPQSSVSP) are enriched in low complexity. Positions 285-328 (NLSNGTPPSLQRTASNNNTTLPQEQPVFAQNGTPKQSNPVTVTS) are enriched in polar residues. 2 consecutive UBA domains span residues 340–381 (SPSE…LFTH) and 403–449 (GSEE…LMTR).

As to quaternary structure, component of an ESCRT-I complex (endosomal sorting complex required for transport I).

Its subcellular location is the cytoplasm. It localises to the cytosol. The protein resides in the endosome. Its function is as follows. Component of the ESCRT-I complex, a regulator of vesicular trafficking process. Binds to ubiquitinated cargo proteins and is required for the sorting of endocytic ubiquitinated cargos into multivesicular bodies (MVBs). The chain is Ubiquitin-associated protein 1 from Danio rerio (Zebrafish).